We begin with the raw amino-acid sequence, 548 residues long: uncharacterized protein (548 aa).

A DhaL domain is found at 8 to 200 (KLFADMIIQG…LLCVYEGFLK (193 aa)).

This is an uncharacterized protein from Staphylococcus aureus (strain NCTC 8325 / PS 47).